The chain runs to 139 residues: Large ribosomal subunit protein uL16 (139 aa).

The protein belongs to the universal ribosomal protein uL16 family. As to quaternary structure, part of the 50S ribosomal subunit.

Its function is as follows. Binds 23S rRNA and is also seen to make contacts with the A and possibly P site tRNAs. The sequence is that of Large ribosomal subunit protein uL16 from Protochlamydia amoebophila (strain UWE25).